The following is a 105-amino-acid chain: Small ribosomal subunit protein eS10B (105 aa).

It belongs to the eukaryotic ribosomal protein eS10 family. Component of the small ribosomal subunit (SSU). Mature yeast ribosomes consist of a small (40S) and a large (60S) subunit. The 40S small subunit contains 1 molecule of ribosomal RNA (18S rRNA) and 33 different proteins (encoded by 57 genes). The large 60S subunit contains 3 rRNA molecules (25S, 5.8S and 5S rRNA) and 46 different proteins (encoded by 81 genes). eS10 interacts with GCN1 (via middle region); this interaction is direct and promotes GCN2 kinase activity. The N-terminus is not modified.

The protein resides in the cytoplasm. Component of the ribosome, a large ribonucleoprotein complex responsible for the synthesis of proteins in the cell. The small ribosomal subunit (SSU) binds messenger RNAs (mRNAs) and translates the encoded message by selecting cognate aminoacyl-transfer RNA (tRNA) molecules. The large subunit (LSU) contains the ribosomal catalytic site termed the peptidyl transferase center (PTC), which catalyzes the formation of peptide bonds, thereby polymerizing the amino acids delivered by tRNAs into a polypeptide chain. The nascent polypeptides leave the ribosome through a tunnel in the LSU and interact with protein factors that function in enzymatic processing, targeting, and the membrane insertion of nascent chains at the exit of the ribosomal tunnel. eS10 plays a role as a positive regulator of the GCN2 kinase activity by stimulating GCN1-mediated GCN2 activation. The chain is Small ribosomal subunit protein eS10B from Saccharomyces cerevisiae (strain ATCC 204508 / S288c) (Baker's yeast).